We begin with the raw amino-acid sequence, 254 residues long: 3-deoxy-manno-octulosonate cytidylyltransferase (254 aa).

It belongs to the KdsB family.

Its subcellular location is the cytoplasm. The catalysed reaction is 3-deoxy-alpha-D-manno-oct-2-ulosonate + CTP = CMP-3-deoxy-beta-D-manno-octulosonate + diphosphate. Its pathway is nucleotide-sugar biosynthesis; CMP-3-deoxy-D-manno-octulosonate biosynthesis; CMP-3-deoxy-D-manno-octulosonate from 3-deoxy-D-manno-octulosonate and CTP: step 1/1. It participates in bacterial outer membrane biogenesis; lipopolysaccharide biosynthesis. In terms of biological role, activates KDO (a required 8-carbon sugar) for incorporation into bacterial lipopolysaccharide in Gram-negative bacteria. The sequence is that of 3-deoxy-manno-octulosonate cytidylyltransferase from Chlamydia trachomatis serovar A (strain ATCC VR-571B / DSM 19440 / HAR-13).